Consider the following 130-residue polypeptide: Small ribosomal subunit protein uS11 (130 aa).

Belongs to the universal ribosomal protein uS11 family. As to quaternary structure, part of the 30S ribosomal subunit. Interacts with proteins S7 and S18. Binds to IF-3.

Its function is as follows. Located on the platform of the 30S subunit, it bridges several disparate RNA helices of the 16S rRNA. Forms part of the Shine-Dalgarno cleft in the 70S ribosome. The polypeptide is Small ribosomal subunit protein uS11 (Prochlorococcus marinus (strain NATL2A)).